Here is an 878-residue protein sequence, read N- to C-terminus: Alanine--tRNA ligase (878 aa).

H565, H569, C667, and H671 together coordinate Zn(2+).

Belongs to the class-II aminoacyl-tRNA synthetase family. Zn(2+) serves as cofactor.

Its subcellular location is the cytoplasm. The enzyme catalyses tRNA(Ala) + L-alanine + ATP = L-alanyl-tRNA(Ala) + AMP + diphosphate. In terms of biological role, catalyzes the attachment of alanine to tRNA(Ala) in a two-step reaction: alanine is first activated by ATP to form Ala-AMP and then transferred to the acceptor end of tRNA(Ala). Also edits incorrectly charged Ser-tRNA(Ala) and Gly-tRNA(Ala) via its editing domain. The polypeptide is Alanine--tRNA ligase (Desulforamulus reducens (strain ATCC BAA-1160 / DSM 100696 / MI-1) (Desulfotomaculum reducens)).